A 209-amino-acid polypeptide reads, in one-letter code: Orotate phosphoribosyltransferase (209 aa).

5-phospho-alpha-D-ribose 1-diphosphate contacts are provided by residues Arg98, Lys102, His104, and 124-132; that span reads EDLISTGKS. Position 128 (Ser128) interacts with orotate.

It belongs to the purine/pyrimidine phosphoribosyltransferase family. PyrE subfamily. Homodimer. Requires Mg(2+) as cofactor.

The catalysed reaction is orotidine 5'-phosphate + diphosphate = orotate + 5-phospho-alpha-D-ribose 1-diphosphate. It functions in the pathway pyrimidine metabolism; UMP biosynthesis via de novo pathway; UMP from orotate: step 1/2. Its function is as follows. Catalyzes the transfer of a ribosyl phosphate group from 5-phosphoribose 1-diphosphate to orotate, leading to the formation of orotidine monophosphate (OMP). This Malacoplasma penetrans (strain HF-2) (Mycoplasma penetrans) protein is Orotate phosphoribosyltransferase.